The following is a 71-amino-acid chain: MAKVCYSCGKGPSFGNARSHSLRATRRRWNPNLQKVRIREGGATKRVWVCASCLKGFKVQKAVRPVPAAEA.

Belongs to the bacterial ribosomal protein bL28 family.

This is Large ribosomal subunit protein bL28 from Rubrobacter xylanophilus (strain DSM 9941 / JCM 11954 / NBRC 16129 / PRD-1).